Here is a 448-residue protein sequence, read N- to C-terminus: Trigger factor (448 aa).

In terms of domain architecture, PPIase FKBP-type spans 167-253; the sequence is GSIVRVDFVE…IKDIKKRDIP (87 aa).

It belongs to the FKBP-type PPIase family. Tig subfamily.

Its subcellular location is the cytoplasm. The catalysed reaction is [protein]-peptidylproline (omega=180) = [protein]-peptidylproline (omega=0). In terms of biological role, involved in protein export. Acts as a chaperone by maintaining the newly synthesized protein in an open conformation. Functions as a peptidyl-prolyl cis-trans isomerase. The chain is Trigger factor from Borrelia hermsii (strain HS1 / DAH).